Reading from the N-terminus, the 227-residue chain is Urease accessory protein UreF (227 aa).

It belongs to the UreF family. UreD, UreF and UreG form a complex that acts as a GTP-hydrolysis-dependent molecular chaperone, activating the urease apoprotein by helping to assemble the nickel containing metallocenter of UreC. The UreE protein probably delivers the nickel.

It localises to the cytoplasm. Required for maturation of urease via the functional incorporation of the urease nickel metallocenter. The chain is Urease accessory protein UreF from Bacillus sp. (strain TB-90).